Here is a 1274-residue protein sequence, read N- to C-terminus: DENN domain-containing protein 5B (1274 aa).

At Ser2 the chain carries N-acetylserine. One can recognise a uDENN domain in the interval 39–244 (DELAGENFDQ…EVPLPPPGRS (206 aa)). Phosphoserine is present on residues Ser49 and Ser178. The 137-residue stretch at 263-399 (ELPLSDYPLR…VDFIQELSEV (137 aa)) folds into the cDENN domain. The dDENN domain maps to 401–581 (LQFGIPPEGS…DNKIMSQWEE (181 aa)). The RUN 1 domain occupies 772–932 (LEENTLIASL…DYFCFTSVFT (161 aa)). Ser822 is subject to Phosphoserine. A helical membrane pass occupies residues 916–936 (LLSLNAVDYFCFTSVFTTIMI). A PLAT domain is found at 936–1044 (IPYRSVIIPI…DDGSLERILI (109 aa)). Thr1062 carries the phosphothreonine modification. A phosphoserine mark is found at Ser1068, Ser1076, and Ser1079. The RUN 2 domain occupies 1118–1267 (TVLLCGENGL…QDFTIVLEGS (150 aa)).

The protein belongs to the RAB6IP1 family.

It localises to the membrane. Functionally, guanine nucleotide exchange factor (GEF) which may activate RAB39A and/or RAB39B. Promotes the exchange of GDP to GTP, converting inactive GDP-bound Rab proteins into their active GTP-bound form. The protein is DENN domain-containing protein 5B (Dennd5b) of Mus musculus (Mouse).